A 303-amino-acid chain; its full sequence is Elongation factor Ts (303 aa).

The segment at 80 to 83 (TDFV) is involved in Mg(2+) ion dislocation from EF-Tu.

The protein belongs to the EF-Ts family.

Its subcellular location is the cytoplasm. Functionally, associates with the EF-Tu.GDP complex and induces the exchange of GDP to GTP. It remains bound to the aminoacyl-tRNA.EF-Tu.GTP complex up to the GTP hydrolysis stage on the ribosome. This is Elongation factor Ts from Clostridium botulinum (strain Eklund 17B / Type B).